Consider the following 326-residue polypeptide: NAD-dependent protein deacylase SIR5 (326 aa).

The N-terminal 26 residues, 1–26 (MRLLRPTPRLSSIFSSKTATSNLRFF), are a transit peptide targeting the mitochondrion. A Deacetylase sirtuin-type domain is found at 28–324 (AMAPHNDVGA…IGKLETDKKE (297 aa)). 53-72 (GAGLSASSGLPTFRGAGGLW) lines the NAD(+) pocket. Positions 97 and 100 each coordinate substrate. Histidine 151 serves as the catalytic Proton acceptor. The Zn(2+) site is built by cysteine 159, cysteine 162, cysteine 211, and cysteine 214.

It belongs to the sirtuin family. Class I subfamily. Interacts with LAT1; the interaction is direct. It depends on Zn(2+) as a cofactor.

The protein resides in the mitochondrion. Its subcellular location is the cytoplasm. It localises to the cytosol. The protein localises to the nucleus. It is found in the chromosome. The enzyme catalyses N(6)-acetyl-L-lysyl-[protein] + NAD(+) + H2O = 2''-O-acetyl-ADP-D-ribose + nicotinamide + L-lysyl-[protein]. It carries out the reaction N(6)-(2E)-butenoyl-L-lysyl-[protein] + H2O = (2E)-2-butenoate + L-lysyl-[protein]. In terms of biological role, NAD-dependent protein-lysine deacylase that decrotonylates the PDC (pyruvate dehydrogenase complex) subunit LAT1 at 'Lys-148' to inhibit PDC activity and consequently ATP production. Also decrotonylates histone H3 crotonylated at 'Lys-18' (H3K18cr), to repress the expression of genes involved in aerobic respiration. May also act as a NAD-dependent deacetylase. Does not mediate desuccinylation, demalonylation, or deglutarylation of LAT1. The sequence is that of NAD-dependent protein deacylase SIR5 from Fusarium oxysporum f. sp. lycopersici (strain 4287 / CBS 123668 / FGSC 9935 / NRRL 34936) (Fusarium vascular wilt of tomato).